A 379-amino-acid polypeptide reads, in one-letter code: GPN-loop GTPase QQT2 (379 aa).

Position 1 is an N-acetylmethionine (Met1). 51–56 provides a ligand contact to GTP; it reads GSGKTS. Residues 108 to 110 carry the Gly-Pro-Asn (GPN)-loop; involved in dimer interface motif; that stretch reads GPN. Residues 211 to 214 and Ala267 contribute to the GTP site; that span reads NKTD. Residues 288-322 are a coiled coil; that stretch reads METYKADLDMRKADKERLEEERKKHEMEKLRKDME. Basic and acidic residues-rich tracts occupy residues 303–322 and 335–346; these read ERLEEERKKHEMEKLRKDME and LKDRDATEKMML. Residues 303 to 379 are disordered; the sequence is ERLEEERKKH…EDDETKHYYL (77 aa). Over residues 347 to 372 the composition is skewed to acidic residues; sequence EEDDEDFQVEDEEDSDDAIDEDDEDD.

The protein belongs to the GPN-loop GTPase family. Heterodimer with QQT1. In terms of tissue distribution, expressed in individual cells of roots, leaves and flowers.

The protein localises to the cytoplasm. It is found in the nucleus. The protein resides in the cytoskeleton. It localises to the spindle. Its subcellular location is the phragmoplast. Functionally, small GTPase that is essential for the correct formation of the tangential divisions in early embryos. Associates with microtubule during mitosis and may function in the positioning of the division plane. May participate in the patterning of the early embryo at the octant-dermatogen transition. In Arabidopsis thaliana (Mouse-ear cress), this protein is GPN-loop GTPase QQT2.